The chain runs to 360 residues: Small ribosomal subunit protein bS1m (360 aa).

A compositionally biased stretch (low complexity) spans 1–15; the sequence is MSSSNLSSILRNSRI. A disordered region spans residues 1 to 31; the sequence is MSSSNLSSILRNSRIAQVPKPKGPLFSPDKK.

It belongs to the bacterial ribosomal protein bS1 family. In terms of assembly, component of the mitochondrial small ribosomal subunit.

It is found in the mitochondrion. Involved in mitochondrial genome encoded proteins translation. The polypeptide is Small ribosomal subunit protein bS1m (MRP51) (Eremothecium gossypii (strain ATCC 10895 / CBS 109.51 / FGSC 9923 / NRRL Y-1056) (Yeast)).